The sequence spans 509 residues: 3-octaprenyl-4-hydroxybenzoate carboxy-lyase (509 aa).

Position 179 (asparagine 179) interacts with Mn(2+). Prenylated FMN-binding positions include 182-184, 196-198, and 201-202; these read IYR, RWL, and RG. A Mn(2+)-binding site is contributed by glutamate 245. Residue aspartate 304 is the Proton donor of the active site.

This sequence belongs to the UbiD family. In terms of assembly, homohexamer. Requires prenylated FMN as cofactor. Mn(2+) is required as a cofactor.

Its subcellular location is the cell membrane. The enzyme catalyses a 4-hydroxy-3-(all-trans-polyprenyl)benzoate + H(+) = a 2-(all-trans-polyprenyl)phenol + CO2. It functions in the pathway cofactor biosynthesis; ubiquinone biosynthesis. Its function is as follows. Catalyzes the decarboxylation of 3-octaprenyl-4-hydroxy benzoate to 2-octaprenylphenol, an intermediate step in ubiquinone biosynthesis. The sequence is that of 3-octaprenyl-4-hydroxybenzoate carboxy-lyase from Cupriavidus pinatubonensis (strain JMP 134 / LMG 1197) (Cupriavidus necator (strain JMP 134)).